The following is a 414-amino-acid chain: 3-oxoacyl-[acyl-carrier-protein] synthase 2 (414 aa).

The 408-residue stretch at 4 to 411 (NKRVVITGMG…GHNAVLVFKK (408 aa)) folds into the Ketosynthase family 3 (KS3) domain. Catalysis depends on for beta-ketoacyl synthase activity residues cysteine 165, histidine 304, and histidine 341.

It belongs to the thiolase-like superfamily. Beta-ketoacyl-ACP synthases family.

The enzyme catalyses a fatty acyl-[ACP] + malonyl-[ACP] + H(+) = a 3-oxoacyl-[ACP] + holo-[ACP] + CO2. It catalyses the reaction (9Z)-hexadecenoyl-[ACP] + malonyl-[ACP] + H(+) = 3-oxo-(11Z)-octadecenoyl-[ACP] + holo-[ACP] + CO2. It functions in the pathway lipid metabolism; fatty acid biosynthesis. In terms of biological role, involved in the type II fatty acid elongation cycle. Catalyzes the elongation of a wide range of acyl-ACP by the addition of two carbons from malonyl-ACP to an acyl acceptor. Can efficiently catalyze the conversion of palmitoleoyl-ACP (cis-hexadec-9-enoyl-ACP) to cis-vaccenoyl-ACP (cis-octadec-11-enoyl-ACP), an essential step in the thermal regulation of fatty acid composition. This Staphylococcus aureus (strain Mu50 / ATCC 700699) protein is 3-oxoacyl-[acyl-carrier-protein] synthase 2 (fabF).